The following is a 544-amino-acid chain: Ell-associated factor Eaf (544 aa).

The interval 147–544 is disordered; sequence QSVPMNMGHQ…LSSNSSDDDD (398 aa). Residues 193–202 show a composition bias toward basic and acidic residues; that stretch reads SSKDKVDFKP. Ser205 carries the phosphoserine modification. Positions 264 to 273 are enriched in low complexity; it reads SGSSTGSSSG. The segment covering 287–299 has biased composition (basic residues); it reads GKQRQAHGKRQQI. Low complexity-rich tracts occupy residues 305–319, 333–374, and 396–407; these read PPVQ…QQQP, QPHP…QQRP, and ASQSVAQAAAVL. Acidic residues predominate over residues 425-440; sequence DSSDSDSGSDSDDSTE. 3 stretches are compositionally biased toward low complexity: residues 450 to 483, 503 to 513, and 526 to 544; these read EQQQ…HMNQ, QQPQPQPQQQQ, and NDLL…DDDD.

This sequence belongs to the EAF family.

Its subcellular location is the nucleus. Functionally, promotes transcriptional elongation by Su(Tpl)/ELL. Essential for development. This Drosophila persimilis (Fruit fly) protein is Ell-associated factor Eaf.